Here is a 350-residue protein sequence, read N- to C-terminus: Phosphoribosylformylglycinamidine cyclo-ligase (350 aa).

It belongs to the AIR synthase family.

The protein resides in the cytoplasm. It catalyses the reaction 2-formamido-N(1)-(5-O-phospho-beta-D-ribosyl)acetamidine + ATP = 5-amino-1-(5-phospho-beta-D-ribosyl)imidazole + ADP + phosphate + H(+). It participates in purine metabolism; IMP biosynthesis via de novo pathway; 5-amino-1-(5-phospho-D-ribosyl)imidazole from N(2)-formyl-N(1)-(5-phospho-D-ribosyl)glycinamide: step 2/2. The protein is Phosphoribosylformylglycinamidine cyclo-ligase of Nitratidesulfovibrio vulgaris (strain DSM 19637 / Miyazaki F) (Desulfovibrio vulgaris).